The sequence spans 367 residues: Multifunctional tryptophan biosynthesis protein (367 aa).

Positions 7–201 constitute a Glutamine amidotransferase type-1 domain; that stretch reads NVVMIDNYDS…LNVSGGYWEE (195 aa). 58–60 serves as a coordination point for L-glutamine; the sequence is GPG. Cys-86 (nucleophile; for GATase activity) is an active-site residue. L-glutamine is bound by residues Gln-90 and 136-137; that span reads SL. Residues His-175 and Glu-177 each act as for GATase activity in the active site. Positions 209–367 are indole-3-glycerol phosphate synthase; the sequence is RKESILEKIY…TVLLIVKMLS (159 aa).

As to quaternary structure, tetramer of two components I and two components II.

The catalysed reaction is chorismate + L-glutamine = anthranilate + pyruvate + L-glutamate + H(+). The enzyme catalyses 1-(2-carboxyphenylamino)-1-deoxy-D-ribulose 5-phosphate + H(+) = (1S,2R)-1-C-(indol-3-yl)glycerol 3-phosphate + CO2 + H2O. It functions in the pathway amino-acid biosynthesis; L-tryptophan biosynthesis; L-tryptophan from chorismate: step 1/5. It participates in amino-acid biosynthesis; L-tryptophan biosynthesis; L-tryptophan from chorismate: step 4/5. The sequence is that of Multifunctional tryptophan biosynthesis protein from Pichia angusta (Yeast).